The chain runs to 248 residues: MKFLVLVAFLGVAVAFPISDEDDDKIVGGYSCARSAAPYQVSLNSGYHFCGGSLISSQWVLSAAHCYKSSIQVKLGEYNLAAQDGSEQTISSSKVIRHSGYNANTLNNDIMLIKLSKAATLNSYVNTVPLPTSCVTAGTTCLISGWGNTLSSGSLYPDVLQCLNAPVLSSSQCSSAYPGRITSNMICIGYLNGGKDSCQGDSGGPVVCNGQLQGFVSWGIGCAQKGYPGVYTKVCNYVSWIKTTMSSN.

A signal peptide spans 1-15 (MKFLVLVAFLGVAVA). A propeptide spans 16-25 (FPISDEDDDK) (activation peptide). The Peptidase S1 domain maps to 26-246 (IVGGYSCARS…YVSWIKTTMS (221 aa)). Disulfide bonds link Cys-32–Cys-162, Cys-50–Cys-66, Cys-134–Cys-235, Cys-141–Cys-208, Cys-173–Cys-187, and Cys-198–Cys-222. Residue His-65 is the Charge relay system of the active site. Glu-77, Asn-79, and Glu-87 together coordinate Ca(2+). The active-site Charge relay system is Asp-109. Ser-202 (charge relay system) is an active-site residue.

Belongs to the peptidase S1 family. Ca(2+) serves as cofactor. High levels are seen in the pancreas while lower levels are found in the liver, spleen and thymus.

The protein localises to the secreted. The protein resides in the extracellular space. It catalyses the reaction Preferential cleavage: Arg-|-Xaa, Lys-|-Xaa.. This Gallus gallus (Chicken) protein is Trypsin I-P38.